Consider the following 363-residue polypeptide: Cytochrome b (363 aa).

The next 4 helical transmembrane spans lie at 23–43 (FGFI…MLSF), 67–89 (WFVR…LHIM), 102–122 (SWYS…VGYV), and 164–184 (FFSI…FHLY). Heme b-binding residues include His-73 and His-87. His-168 and His-182 together coordinate heme b. His-187 contacts a ubiquinone. 4 helical membrane-spanning segments follow: residues 210–230 (VLFS…VQSG), 271–291 (VFPT…LLVL), 310–330 (VWTT…SIGK), and 332–352 (VVHV…VLFI).

The protein belongs to the cytochrome b family. The main subunits of complex b-c1 are: cytochrome b, cytochrome c1 and the Rieske protein. It depends on heme b as a cofactor.

The protein resides in the mitochondrion inner membrane. Its function is as follows. Component of the ubiquinol-cytochrome c reductase complex (complex III or cytochrome b-c1 complex) that is part of the mitochondrial respiratory chain. The b-c1 complex mediates electron transfer from ubiquinol to cytochrome c. Contributes to the generation of a proton gradient across the mitochondrial membrane that is then used for ATP synthesis. In Theileria annulata, this protein is Cytochrome b (MT-CYB).